The chain runs to 178 residues: Large ribosomal subunit protein uL10 (178 aa).

This sequence belongs to the universal ribosomal protein uL10 family. In terms of assembly, part of the ribosomal stalk of the 50S ribosomal subunit. The N-terminus interacts with L11 and the large rRNA to form the base of the stalk. The C-terminus forms an elongated spine to which L12 dimers bind in a sequential fashion forming a multimeric L10(L12)X complex.

Its function is as follows. Forms part of the ribosomal stalk, playing a central role in the interaction of the ribosome with GTP-bound translation factors. The chain is Large ribosomal subunit protein uL10 from Dictyoglomus thermophilum (strain ATCC 35947 / DSM 3960 / H-6-12).